Reading from the N-terminus, the 1043-residue chain is V(D)J recombination-activating protein 1 (1043 aa).

Positions Met-1–Val-288 are interaction with importin alpha-1. Over residues Lys-40 to Glu-54 the composition is skewed to basic and acidic residues. The disordered stretch occupies residues Lys-40 to Leu-80. Lys-234 participates in a covalent cross-link: Glycyl lysine isopeptide (Lys-Gly) (interchain with G-Cter in ubiquitin). Residues Cys-269, His-273, Cys-293, Cys-296, His-298, Cys-308, His-310, Cys-313, Cys-316, Cys-328, Cys-331, Cys-358, Cys-363, His-375, and His-379 each contribute to the Zn(2+) site. The RING-type zinc finger occupies Cys-293–Arg-332. The RAG1-type zinc-finger motif lies at Leu-354 to Lys-383. The NBD DNA-binding region spans Gly-392–Gln-459. Asp-603, Asp-711, and Glu-965 together coordinate a divalent metal cation.

It belongs to the RAG1 family. In terms of assembly, homodimer. Component of the RAG complex composed of core components RAG1 and RAG2, and associated component HMGB1 or HMGB2. Interacts with DCAF1, leading to recruitment of the CUL4A-RBX1-DDB1-DCAF1/VPRBP complex to ubiquitinate proteins and limit error-prone repair during V(D)J recombination. Mg(2+) is required as a cofactor. Mn(2+) serves as cofactor. Autoubiquitinated in the presence of CDC34/UBCH3. In terms of tissue distribution, maturing lymphoid cells.

Its subcellular location is the nucleus. It carries out the reaction S-ubiquitinyl-[E2 ubiquitin-conjugating enzyme]-L-cysteine + [acceptor protein]-L-lysine = [E2 ubiquitin-conjugating enzyme]-L-cysteine + N(6)-ubiquitinyl-[acceptor protein]-L-lysine.. Functionally, catalytic component of the RAG complex, a multiprotein complex that mediates the DNA cleavage phase during V(D)J recombination. V(D)J recombination assembles a diverse repertoire of immunoglobulin and T-cell receptor genes in developing B and T-lymphocytes through rearrangement of different V (variable), in some cases D (diversity), and J (joining) gene segments. In the RAG complex, RAG1 mediates the DNA-binding to the conserved recombination signal sequences (RSS) and catalyzes the DNA cleavage activities by introducing a double-strand break between the RSS and the adjacent coding segment. RAG2 is not a catalytic component but is required for all known catalytic activities. DNA cleavage occurs in 2 steps: a first nick is introduced in the top strand immediately upstream of the heptamer, generating a 3'-hydroxyl group that can attack the phosphodiester bond on the opposite strand in a direct transesterification reaction, thereby creating 4 DNA ends: 2 hairpin coding ends and 2 blunt, 5'-phosphorylated ends. The chromatin structure plays an essential role in the V(D)J recombination reactions and the presence of histone H3 trimethylated at 'Lys-4' (H3K4me3) stimulates both the nicking and haipinning steps. The RAG complex also plays a role in pre-B cell allelic exclusion, a process leading to expression of a single immunoglobulin heavy chain allele to enforce clonality and monospecific recognition by the B-cell antigen receptor (BCR) expressed on individual B-lymphocytes. The introduction of DNA breaks by the RAG complex on one immunoglobulin allele induces ATM-dependent repositioning of the other allele to pericentromeric heterochromatin, preventing accessibility to the RAG complex and recombination of the second allele. In addition to its endonuclease activity, RAG1 also acts as an E3 ubiquitin-protein ligase that mediates monoubiquitination of histone H3. Histone H3 monoubiquitination is required for the joining step of V(D)J recombination. Mediates polyubiquitination of KPNA1. The sequence is that of V(D)J recombination-activating protein 1 (RAG1) from Homo sapiens (Human).